We begin with the raw amino-acid sequence, 261 residues long: tRNA pseudouridine synthase A (261 aa).

The active-site Nucleophile is the Asp-51. Tyr-109 lines the substrate pocket.

This sequence belongs to the tRNA pseudouridine synthase TruA family. Homodimer.

The enzyme catalyses uridine(38/39/40) in tRNA = pseudouridine(38/39/40) in tRNA. Formation of pseudouridine at positions 38, 39 and 40 in the anticodon stem and loop of transfer RNAs. This chain is tRNA pseudouridine synthase A, found in Shewanella woodyi (strain ATCC 51908 / MS32).